The sequence spans 30 residues: Trypsin inhibitor 3 (30 aa).

Gln1 bears the Pyrrolidone carboxylic acid mark. 3 disulfide bridges follow: Cys4/Cys21, Cys11/Cys23, and Cys17/Cys29.

It is found in the secreted. Its function is as follows. Inhibits trypsin; probably participates in a plant defense mechanism. This Momordica cochinchinensis (Spiny bitter cucumber) protein is Trypsin inhibitor 3.